The chain runs to 59 residues: uncharacterized protein (59 aa).

The interval 1–59 is disordered; the sequence is MAKKPGENTGKNGGIYQEVGPRGGKKDNFATVKDNERLPPTTKPGNGWVLDKRTPDSKK. Basic and acidic residues-rich tracts occupy residues 24–37 and 50–59; these read GKKD…DNER and LDKRTPDSKK.

This is an uncharacterized protein from Salmonella phage P22 (Bacteriophage P22).